We begin with the raw amino-acid sequence, 214 residues long: Adenylate kinase (214 aa).

10–15 is an ATP binding site; that stretch reads GAGKGT. An NMP region spans residues 30 to 59; that stretch reads STGDMLRAAIKAGTELGKQAKAVIDAGQLV. Residues T31, R36, 57–59, 85–88, and Q92 each bind AMP; these read QLV and GFPR. Residues 122 to 159 are LID; sequence GRRAHLPSGRTYHVVYNPPKVEGKDDVTGEDLVVRDDD. ATP is bound by residues R123 and 132–133; that span reads TY. 2 residues coordinate AMP: R156 and R167. K200 is a binding site for ATP.

Belongs to the adenylate kinase family. In terms of assembly, monomer.

The protein resides in the cytoplasm. The catalysed reaction is AMP + ATP = 2 ADP. Its pathway is purine metabolism; AMP biosynthesis via salvage pathway; AMP from ADP: step 1/1. Its function is as follows. Catalyzes the reversible transfer of the terminal phosphate group between ATP and AMP. Plays an important role in cellular energy homeostasis and in adenine nucleotide metabolism. The sequence is that of Adenylate kinase from Vibrio campbellii (strain ATCC BAA-1116).